The following is a 151-amino-acid chain: Nucleoside diphosphate kinase (151 aa).

ATP is bound by residues Lys-11, Phe-59, Arg-87, Thr-93, Arg-104, and Asn-114. Residue His-117 is the Pros-phosphohistidine intermediate of the active site.

This sequence belongs to the NDK family. As to quaternary structure, homotetramer. Mg(2+) is required as a cofactor.

The protein resides in the cytoplasm. The catalysed reaction is a 2'-deoxyribonucleoside 5'-diphosphate + ATP = a 2'-deoxyribonucleoside 5'-triphosphate + ADP. It catalyses the reaction a ribonucleoside 5'-diphosphate + ATP = a ribonucleoside 5'-triphosphate + ADP. Its function is as follows. Major role in the synthesis of nucleoside triphosphates other than ATP. The ATP gamma phosphate is transferred to the NDP beta phosphate via a ping-pong mechanism, using a phosphorylated active-site intermediate. The polypeptide is Nucleoside diphosphate kinase (Prochlorococcus marinus (strain NATL2A)).